A 2497-amino-acid chain; its full sequence is Integrator complex subunit 1 homolog (2497 aa).

The segment covering 1 to 10 (MMLNKIKRSK) has biased composition (basic residues). Disordered stretches follow at residues 1 to 151 (MMLN…NNNI), 300 to 337 (QPQPPQQQQTKQPVNIKTQPQQQQQQQQQPQPQQIKKS), 946 to 965 (QQQQQQLQTPQQQQQQQQPT), 1028 to 1108 (TTTT…TSSS), 1234 to 1292 (INNN…NQKS), and 1572 to 1604 (NNNNNNNNNNNNNNNNNNNNNNNNNNNNNNNIT). Composition is skewed to low complexity over residues 37 to 46 (SDNNNNNSND), 60 to 151 (NNSI…NNNI), 305 to 333 (QQQQTKQPVNIKTQPQQQQQQQQQPQPQQ), 946 to 963 (QQQQQQLQTPQQQQQQQQ), and 1028 to 1058 (TTTTTSSTTTTTTTTTSTTTSTSTSSSSSSL). The span at 1075–1091 (SGLSGSSNGINQSSDSI) shows a compositional bias: polar residues. Low complexity-rich tracts occupy residues 1097-1108 (STSPTTTTTSSS), 1234-1265 (INNNDNNNNNNNNNNNNNNNNNNNNNDNNINK), 1272-1289 (HSNSMANNNLPNNNNKNN), and 1572-1602 (NNNNNNNNNNNNNNNNNNNNNNNNNNNNNNN). A coiled-coil region spans residues 1645–1675 (RILKNTTQQKQQKQQQKESVQKSIQSLSKLI). The span at 2084–2115 (QQQQQQQQQQQQQQKQQSNNSNNINNNNNNNN) shows a compositional bias: low complexity. 2 disordered regions span residues 2084-2123 (QQQQQQQQQQQQQQKQQSNNSNNINNNNNNNNSEKKQKSK) and 2329-2350 (NNNNNNNNNNNNNNNNNNNNNN).

This sequence belongs to the Integrator subunit 1 family. Component of the Integrator complex. The core complex associates with protein phosphatase 2A subunits to form the Integrator-PP2A (INTAC) complex.

The protein localises to the nucleus. In terms of biological role, component of the integrator complex, a multiprotein complex that terminates RNA polymerase II (Pol II) transcription in the promoter-proximal region of genes. The integrator complex provides a quality checkpoint during transcription elongation by driving premature transcription termination of transcripts that are unfavorably configured for transcriptional elongation: the complex terminates transcription by (1) catalyzing dephosphorylation of the C-terminal domain (CTD) of Pol II subunit polr2a, (2) degrading the exiting nascent RNA transcript via endonuclease activity and (3) promoting the release of Pol II from bound DNA. The integrator complex is also involved in terminating the synthesis of non-coding Pol II transcripts, such as enhancer RNAs (eRNAs), small nuclear RNAs (snRNAs), telomerase RNAs and long non-coding RNAs (lncRNAs). This chain is Integrator complex subunit 1 homolog (ints1), found in Dictyostelium discoideum (Social amoeba).